Reading from the N-terminus, the 279-residue chain is Large ribosomal subunit protein uL2 (279 aa).

The disordered stretch occupies residues Gly227 to Arg279.

Belongs to the universal ribosomal protein uL2 family. Part of the 50S ribosomal subunit. Forms a bridge to the 30S subunit in the 70S ribosome.

Functionally, one of the primary rRNA binding proteins. Required for association of the 30S and 50S subunits to form the 70S ribosome, for tRNA binding and peptide bond formation. It has been suggested to have peptidyltransferase activity; this is somewhat controversial. Makes several contacts with the 16S rRNA in the 70S ribosome. In Neorickettsia sennetsu (strain ATCC VR-367 / Miyayama) (Ehrlichia sennetsu), this protein is Large ribosomal subunit protein uL2.